A 227-amino-acid chain; its full sequence is Ribose-5-phosphate isomerase A (227 aa).

Substrate contacts are provided by residues 26–29, 82–85, and 95–98; these read TGST, DGAD, and KGGG. Glu-104 acts as the Proton acceptor in catalysis. Lys-122 lines the substrate pocket.

Belongs to the ribose 5-phosphate isomerase family. Homodimer.

It carries out the reaction aldehydo-D-ribose 5-phosphate = D-ribulose 5-phosphate. The protein operates within carbohydrate degradation; pentose phosphate pathway; D-ribose 5-phosphate from D-ribulose 5-phosphate (non-oxidative stage): step 1/1. Its function is as follows. Catalyzes the reversible conversion of ribose-5-phosphate to ribulose 5-phosphate. This Streptococcus pyogenes serotype M2 (strain MGAS10270) protein is Ribose-5-phosphate isomerase A.